The following is a 1095-amino-acid chain: 1-phosphatidylinositol 4,5-bisphosphate phosphodiesterase (1095 aa).

The PI-PLC X-box domain maps to 319 to 469; the sequence is MEMDQPLAHY…LKRKILIKNK (151 aa). Residues His-334 and His-381 contribute to the active site. Substrate contacts are provided by Lys-467 and Lys-469. The disordered stretch occupies residues 487–529; that stretch reads ELKTDDDPEEDASAGKPPEAAAAPAPAPEAAAAAEGAAEGGGG. Positions 500 to 523 are enriched in low complexity; that stretch reads AGKPPEAAAAPAPAPEAAAAAEGA. Residues 550 to 666 enclose the PI-PLC Y-box domain; that stretch reads LSSMVNYAQP…GYLLKPDFMR (117 aa). The substrate site is built by Ser-579 and Arg-606. Residues 666–794 enclose the C2 domain; sequence RRADKDFDPF…SLRTEANFPM (129 aa). 2 disordered regions span residues 842–863 and 1000–1030; these read IEEQ…EKKE and QAKM…LREK. Composition is skewed to basic and acidic residues over residues 852-863 and 1007-1030; these read DAGKAKEEEKKE and TAKE…LREK.

Interacts with inaD. As to expression, abundantly expressed in the adult retina.

The enzyme catalyses a 1,2-diacyl-sn-glycero-3-phospho-(1D-myo-inositol-4,5-bisphosphate) + H2O = 1D-myo-inositol 1,4,5-trisphosphate + a 1,2-diacyl-sn-glycerol + H(+). In terms of biological role, the production of the second messenger molecules diacylglycerol (DAG) and inositol 1,4,5-trisphosphate (IP3) is mediated by activated phosphatidylinositol-specific phospholipase C enzymes. Essential component of the phototransduction pathway. Essential downstream component of a hh-signaling pathway which regulates the Duox-dependent gut immune response to bacterial uracil; required for the activation of Cad99C and consequently Cad99C-dependent endosome formation, which is essential for the Duox-dependent production of reactive oxygen species (ROS) in response to intestinal bacterial infection. The polypeptide is 1-phosphatidylinositol 4,5-bisphosphate phosphodiesterase (Drosophila melanogaster (Fruit fly)).